The primary structure comprises 486 residues: Galactose-1-phosphate uridylyltransferase (486 aa).

This sequence belongs to the galactose-1-phosphate uridylyltransferase type 2 family.

It is found in the cytoplasm. It catalyses the reaction alpha-D-galactose 1-phosphate + UDP-alpha-D-glucose = alpha-D-glucose 1-phosphate + UDP-alpha-D-galactose. It functions in the pathway carbohydrate metabolism; galactose metabolism. In Lacticaseibacillus paracasei (strain ATCC 334 / BCRC 17002 / CCUG 31169 / CIP 107868 / KCTC 3260 / NRRL B-441) (Lactobacillus paracasei), this protein is Galactose-1-phosphate uridylyltransferase.